Here is a 447-residue protein sequence, read N- to C-terminus: MTSIKHLLINAKKYDQKEFEIKAWVASNRGNTNIRFVEINDGSTIKNLQVVIKKEIMSFLEVDKIRLGAAIHVKGVLKYTPGMAQEIELNADKFILLKNTDEDFPIQKKETSLEALREIPHLRHRTTTLRAIMLIRSTLALEIHKFYNERGYLWVSSPIITGNDGEGAGESFVVDDESKDFFFNKKATLGVTGQLHAEAYALGFSKVYTFAPTFRAENSNTTKHAAEFWMMEPEVAFFDLKDLIKMSDDMLRQVIKRTVEAHPHEFEFFEKNKPGLLKNLNLFLNNKLSILEYREAIKILEKVKDRFEDKNIFFGKDLATEHEKYLAEKHIQGPVAVINYPKSFKAFYMFQNEDNETVAAYDLLVPGIGEVIGGSKRETRYEKLVQRVKDLKINQEDLQWYLDLRRFGQASSAGFGLGFERLIMYITGTENIRDTIPFPRTPKNMKM.

This sequence belongs to the class-II aminoacyl-tRNA synthetase family. In terms of assembly, homodimer.

The protein resides in the cytoplasm. It catalyses the reaction tRNA(Asn) + L-asparagine + ATP = L-asparaginyl-tRNA(Asn) + AMP + diphosphate + H(+). The sequence is that of Asparagine--tRNA ligase from Mycoplasma mobile (strain ATCC 43663 / 163K / NCTC 11711) (Mesomycoplasma mobile).